Reading from the N-terminus, the 147-residue chain is Large ribosomal subunit protein bL9 (147 aa).

Belongs to the bacterial ribosomal protein bL9 family.

Binds to the 23S rRNA. The polypeptide is Large ribosomal subunit protein bL9 (Geobacter sp. (strain M21)).